The chain runs to 431 residues: Helix-loop-helix protein 11 (431 aa).

Positions 88 to 109 (LANRSLSQPAPLSPTSLDPDRR) are disordered. Positions 91–103 (RSLSQPAPLSPTS) are enriched in polar residues. Residues 112 to 163 (MRRQIANCNERRRMQSINAGFLALRALLPRKEGEKLSKAAILQQTADMVHQL) form the bHLH domain. Composition is skewed to polar residues over residues 226–241 (TTTSSQASSPVTPRSN) and 248–257 (LPSSYASSAL). Residues 226 to 311 (TTTSSQASSP…PPPTLPSLET (86 aa)) form a disordered region. Low complexity predominate over residues 274-291 (TTSTPLSLLTLNGSPTSS).

As to expression, expressed in the pharynx, nerve cords, the H-shaped excretory cell, vulva muscles, and the anal depressor (at protein level). Expressed in the intestine (at protein level). In males, it is also expressed in the spicules and hyp7 cells of the hypodermis (at protein level).

It localises to the nucleus. Transcriptional regulator. Component of a feedback loop involving atfs-1, atgl-1 and hlh-11. Binds to the promoter of the atgl-1 lipase to negatively regulate the expression of atgl-1, and thereby promoting fat oxidation in response to mitochondrial stress and mitochondrial respiration in the intestine. In addition, functions with atfs-1 to maintain lifespan. May have a role in fertility and in positively regulating body size. In Caenorhabditis elegans, this protein is Helix-loop-helix protein 11.